Here is a 331-residue protein sequence, read N- to C-terminus: Ferrochelatase (331 aa).

Residues His187 and Glu286 each coordinate Fe cation.

The protein belongs to the ferrochelatase family.

It localises to the cytoplasm. The catalysed reaction is heme b + 2 H(+) = protoporphyrin IX + Fe(2+). Its pathway is porphyrin-containing compound metabolism; protoheme biosynthesis; protoheme from protoporphyrin-IX: step 1/1. Its function is as follows. Catalyzes the ferrous insertion into protoporphyrin IX. The chain is Ferrochelatase from Legionella pneumophila (strain Lens).